The sequence spans 281 residues: Transformer-2 protein homolog alpha (281 aa).

The interval 1–116 (MSDVEENNFE…TGSRANPDPN (116 aa)) is disordered. An N-acetylserine modification is found at Ser-2. Phosphoserine occurs at positions 2 and 14. Phosphothreonine is present on Thr-24. The span at 51-82 (RSRSKSRSRSRRHSHRRYTRSRSHSHRRRSRS) shows a compositional bias: basic residues. 3 positions are modified to phosphoserine: Ser-80, Ser-82, and Ser-84. Phosphothreonine is present on Thr-86. The segment covering 90 to 108 (RRRRSRSHSPMSNRRRHTG) has biased composition (basic residues). Phosphoserine occurs at positions 94 and 96. In terms of domain architecture, RRM spans 117 to 195 (TCLGVFGLSL…RRIRVDYSIT (79 aa)). Lys-196 is covalently cross-linked (Glycyl lysine isopeptide (Lys-Gly) (interchain with G-Cter in SUMO2)). Residues 196–223 (KRAHTPTPGIYMGRPTHSGGGGGGGGGG) form a linker region. A disordered region spans residues 199–281 (HTPTPGIYMG…RSRSYSPRRY (83 aa)). 2 positions are modified to phosphothreonine: Thr-200 and Thr-202. Positions 213 to 231 (SGGGGGGGGGGGGGGGGGG) are enriched in gly residues. Arg-233 carries the omega-N-methylarginine modification. Residues 233 to 257 (RRRDSYYDRGYDRGYDRYEDYDYRR) show a composition bias toward basic and acidic residues. Ser-237 is modified (phosphoserine). Residues 267–281 (YRSRSRSRSYSPRRY) are compositionally biased toward basic residues.

It belongs to the splicing factor SR family. As to quaternary structure, binds to A3 enhancer proteins SRp75, SRp55, SRp40 and SRp30. Interacts with ILDR1 (via C-terminus) and ILDR2. In terms of processing, phosphorylated in the RS domains. Expressed in inner ear.

The protein localises to the nucleus. In terms of biological role, sequence-specific RNA-binding protein which participates in the control of pre-mRNA splicing. In Mus musculus (Mouse), this protein is Transformer-2 protein homolog alpha.